The sequence spans 178 residues: Methyltransferase flvH (178 aa).

Positions 120-136 (QPFNCFCGSQNCLGLIA) constitute a Post-SET domain. 3 residues coordinate Zn(2+): cysteine 124, cysteine 126, and cysteine 131.

The protein belongs to the class V-like SAM-binding methyltransferase superfamily.

It carries out the reaction L-lysine + 2 S-adenosyl-L-methionine = N(6),N(6)-dimethyl-L-lysine + 2 S-adenosyl-L-homocysteine + 2 H(+). Its pathway is secondary metabolite biosynthesis; terpenoid biosynthesis. Methyltransferase; part of the gene cluster that mediates the biosynthesis of flavunoidine, an alkaloidal terpenoid with a tetracyclic cage-like core connected to dimethylcadaverine via a C-N bond and acylated with 5,5-dimethyl-L-pipecolate. The tetracyclic core is synthesized by the terpene cyclase flvE and the cytochrome P450 monooxygenase flvD. The terpene cyclase flvE catalyzes the cyclization of farnesyl pyrophosphate (FPP) to form (1R,4R,5S)-(+)-acoradiene and the cytochrome P450 monooxygenase flvD is then responsible for oxidative conversion of (1R,4R,5S)-(+)-acoradiene into the tetracyclic cage present in the final product flavunoidine. In parallel, the N-methyltransferase flvH dimethylates L-lysine to give N,N-dimethyl-L-Lysin which is decarboxylated by flvG to afford dimethylcadaverine. The terpene cyclase-like protein flvF is the enzyme that attaches the dimethylcadaverine precusor at the C-7 of the tetracyclic cage to yield pre-flavunoidine. The cytochrome monooxygenase flvC hydroxylates the C-10 position of pre-flavunoidine whereas the NRPS flvI acylates the terpenoid core at the hydroxylated C-10 with dimethylpipecolate to yield final flavunoidine. The bifunctional enzyme flvA and the dehydrogenase flvB are responsible for the synthesis of the dimethylpipecolate precursor. The PLP-dependent lyase domain of flvA might use L-O-acetyl-homoserine and alpha-keto-isovalerate to form an intermediary ketone that can cyclize intramolecularly to yield an imine. The imine can be reduced by flvB to yield the 6-carboxylated pipecolate. The C-terminal alpha-KG-dependent oxygenase domain of flvA is then proposed to catalyze the decarboxylation to yield dimethylpipecolate. This is Methyltransferase flvH from Aspergillus flavus (strain ATCC 200026 / FGSC A1120 / IAM 13836 / NRRL 3357 / JCM 12722 / SRRC 167).